Consider the following 429-residue polypeptide: 4-hydroxy-3-methylbut-2-en-1-yl diphosphate synthase (flavodoxin) (429 aa).

The [4Fe-4S] cluster site is built by Cys-317, Cys-320, Cys-363, and Glu-370.

The protein belongs to the IspG family. Requires [4Fe-4S] cluster as cofactor.

The catalysed reaction is (2E)-4-hydroxy-3-methylbut-2-enyl diphosphate + oxidized [flavodoxin] + H2O + 2 H(+) = 2-C-methyl-D-erythritol 2,4-cyclic diphosphate + reduced [flavodoxin]. The protein operates within isoprenoid biosynthesis; isopentenyl diphosphate biosynthesis via DXP pathway; isopentenyl diphosphate from 1-deoxy-D-xylulose 5-phosphate: step 5/6. Converts 2C-methyl-D-erythritol 2,4-cyclodiphosphate (ME-2,4cPP) into 1-hydroxy-2-methyl-2-(E)-butenyl 4-diphosphate. This Deinococcus radiodurans (strain ATCC 13939 / DSM 20539 / JCM 16871 / CCUG 27074 / LMG 4051 / NBRC 15346 / NCIMB 9279 / VKM B-1422 / R1) protein is 4-hydroxy-3-methylbut-2-en-1-yl diphosphate synthase (flavodoxin).